Here is a 281-residue protein sequence, read N- to C-terminus: Urease accessory protein UreD 2 (281 aa).

It belongs to the UreD family. UreD, UreF and UreG form a complex that acts as a GTP-hydrolysis-dependent molecular chaperone, activating the urease apoprotein by helping to assemble the nickel containing metallocenter of UreC. The UreE protein probably delivers the nickel.

The protein resides in the cytoplasm. Functionally, required for maturation of urease via the functional incorporation of the urease nickel metallocenter. This Pseudomonas syringae pv. syringae (strain B728a) protein is Urease accessory protein UreD 2.